A 310-amino-acid polypeptide reads, in one-letter code: Methionyl-tRNA formyltransferase (310 aa).

109 to 112 (SLLP) provides a ligand contact to (6S)-5,6,7,8-tetrahydrofolate.

Belongs to the Fmt family.

The catalysed reaction is L-methionyl-tRNA(fMet) + (6R)-10-formyltetrahydrofolate = N-formyl-L-methionyl-tRNA(fMet) + (6S)-5,6,7,8-tetrahydrofolate + H(+). Functionally, attaches a formyl group to the free amino group of methionyl-tRNA(fMet). The formyl group appears to play a dual role in the initiator identity of N-formylmethionyl-tRNA by promoting its recognition by IF2 and preventing the misappropriation of this tRNA by the elongation apparatus. In Macrococcus caseolyticus (strain JCSC5402) (Macrococcoides caseolyticum), this protein is Methionyl-tRNA formyltransferase.